The chain runs to 313 residues: Olfactory receptor 8C8 (313 aa).

Residues 1–27 are Extracellular-facing; it reads MMQITMENKSSVSEFILMGLTDQPELQ. A glycan (N-linked (GlcNAc...) asparagine) is linked at Asn8. The helical transmembrane segment at 28 to 48 threads the bilayer; sequence LPLFVLFLMNYTATVMGNLTL. Over 49–59 the chain is Cytoplasmic; that stretch reads MNLICLNSNLH. Residues 60-80 form a helical membrane-spanning segment; it reads TPMYFFLFNLSFIDFCYSMVF. Over 81–96 the chain is Extracellular; the sequence is TPKMLMSFILEKNTIS. A helical transmembrane segment spans residues 97–117; it reads FGGCMAQLFFFLFFVNSESYV. Cys100 and Cys192 form a disulfide bridge. At 118-136 the chain is on the cytoplasmic side; it reads LTAMAYDRYVAICKPLTYK. A helical transmembrane segment spans residues 137-157; the sequence is VIMSPKICCLLIFSSYLMGFA. The Extracellular portion of the chain corresponds to 158–208; it reads SAMAHTGCMIRLSFCDSNIINHYMCDIFPLLPLSCSSTYVNELMSSVVVGS. A helical membrane pass occupies residues 209-229; sequence AIILCCLIILISYAMILFNII. At 230-239 the chain is on the cytoplasmic side; the sequence is HMSSGKGWSK. The chain crosses the membrane as a helical span at residues 240-260; the sequence is ALGTCGSHIITVSLFYGSGLL. Residues 261 to 274 lie on the Extracellular side of the membrane; the sequence is AYVKPSSAKTVGQG. The chain crosses the membrane as a helical span at residues 275–295; that stretch reads KFFSVFYTLLVPMLNPLIYSL. Residues 296–313 are Cytoplasmic-facing; the sequence is RNKDVKLAVKKTWKRITS.

It belongs to the G-protein coupled receptor 1 family. As to expression, expressed in neurons in the olfactory epithelium.

The protein localises to the cell membrane. Its function is as follows. Potential odorant receptor. This chain is Olfactory receptor 8C8, found in Mus musculus (Mouse).